The following is a 361-amino-acid chain: Free fatty acid receptor 4 (361 aa).

The Extracellular portion of the chain corresponds to 1–45 (MSPECARAAGDAPLRSLEQANRTRFPFFSDVKGDHRLVLAAVETT). A glycan (N-linked (GlcNAc...) asparagine) is linked at asparagine 21. The helical transmembrane segment at 46-66 (VLVLIFAVSLLGNVCALVLVA) threads the bilayer. Over 67-77 (RRRRRGATACL) the chain is Cytoplasmic. Residues 78-98 (VLNLFCADLLFISAIPLVLAV) traverse the membrane as a helical segment. Residues 99 to 112 (RWTEAWLLGPVACH) lie on the Extracellular side of the membrane. Residues cysteine 111 and cysteine 194 are joined by a disulfide bond. A helical membrane pass occupies residues 113–133 (LLFYVMTLSGSVTILTLAAVS). Residues 134 to 156 (LERMVCIVHLQRGVRGPGRRARA) are Cytoplasmic-facing. A helical transmembrane segment spans residues 157–177 (VLLALIWGYSAVAALPLCVFF). Residues 178-204 (RVVPQRLPGADQEISICTLIWPTIPGE) lie on the Extracellular side of the membrane. A helical membrane pass occupies residues 205-225 (ISWDVSFVTLNFLVPGLVIVI). At 226–268 (SYSKILQITKASRKRLTVSLAYSESHQIRVSQQDFRLFRTLFL) the chain is on the cytoplasmic side. Residues 269 to 289 (LMVSFFIMWSPIIITILLILI) traverse the membrane as a helical segment. Residues 290-295 (QNFKQD) lie on the Extracellular side of the membrane. Residues 296–316 (LVIWPSLFFWVVAFTFANSAL) traverse the membrane as a helical segment. The Cytoplasmic portion of the chain corresponds to 317-361 (NPILYNMTLCRNEWKKIFCCFWFPEKGAILTDTSVKRNDLSIISG). Phosphothreonine is present on residues threonine 347 and threonine 349. A phosphoserine mark is found at serine 350, serine 357, and serine 360.

It belongs to the G-protein coupled receptor 1 family. As to quaternary structure, interacts (via C-terminus) with ARRB2 following LCFAs stimulation. In terms of processing, phosphorylated at two clusters of Ser and Thr residues located in the intracellular C-terminus, a prerequisite for FFAR4 internalization via an ARRB2-dependent pathway. In terms of tissue distribution, the predominant isoform in human tissues. Expressed in adipose tissue, pancreatic islets, lung and brain. Expressed in alpha cells of pancreatic islets. Expressed in primary cilia of perivascular preadipocytes of white adipose tissue (at protein level). As to expression, abundant expression in the intestinal tract. Expressed in colonic intraepithelial neuroendocrine cells.

It localises to the cell membrane. It is found in the endosome membrane. Its subcellular location is the lysosome membrane. The protein localises to the cell projection. The protein resides in the cilium membrane. In terms of biological role, G-protein-coupled receptor for long-chain fatty acids (LCFAs) with a major role in adipogenesis, energy metabolism and inflammation. Signals via G-protein and beta-arrestin pathways. LCFAs sensing initiates activation of phosphoinositidase C-linked G proteins GNAQ and GNA11 (G(q)/G(11)), inducing a variety of cellular responses via second messenger pathways such as intracellular calcium mobilization, modulation of cyclic adenosine monophosphate (cAMP) production, and mitogen-activated protein kinases (MAPKs). After LCFAs binding, associates with beta-arrestin ARRB2 that acts as an adapter protein coupling the receptor to specific downstream signaling pathways, as well as mediating receptor endocytosis. In response to dietary fats, plays an important role in the regulation of adipocyte proliferation and differentiation. Acts as a receptor for omega-3 polyunsaturated fatty acids (PUFAs) at primary cilium of perivascular preadipocytes, initiating an adipogenic program via cAMP and CTCF-dependent chromatin remodeling that ultimately results in transcriptional activation of adipogenic genes and cell cycle entry. Induces differentiation of brown adipocytes probably via autocrine and endocrine functions of FGF21 hormone. Activates brown adipocytes by initiating intracellular calcium signaling that leads to mitochondrial depolarization and fission, and overall increased mitochondrial respiration. Consequently stimulates fatty acid uptake and oxidation in mitochondria together with UCP1-mediated thermogenic respiration, eventually reducing fat mass. Regulates bi-potential differentiation of bone marrow mesenchymal stem cells toward osteoblasts or adipocytes likely by up-regulating distinct integrins. In response to dietary fats regulates hormone secretion and appetite. Stimulates GIP and GLP1 secretion from enteroendocrine cells as well as GCG secretion in pancreatic alpha cells, thereby playing a role in the regulation of blood glucose levels. Negatively regulates glucose-induced SST secretion in pancreatic delta cells. Mediates LCFAs inhibition of GHRL secretion, an appetite-controlling hormone. In taste buds, contributes to sensing of dietary fatty acids by the gustatory system. During the inflammatory response, promotes anti-inflammatory M2 macrophage differentiation in adipose tissue. Mediates the anti-inflammatory effects of omega-3 PUFAs via inhibition of NLRP3 inflammasome activation. In this pathway, interacts with adapter protein ARRB2 and inhibits the priming step triggered by Toll-like receptors (TLRs) at the level of TAK1 and TAB1. Further inhibits the activation step when ARRB2 directly associates with NLRP3, leading to inhibition of pro-inflammatory cytokine release. Mediates LCFAs anti-apoptotic effects. Receptor for LCFAs decoupled from G-protein signaling. May signal through beta-arrestin pathway. After LCFAs binding, associates with beta-arrestin ARRB2 that may act as an adapter protein coupling the receptor to specific downstream signaling pathways, as well as mediating receptor endocytosis. This chain is Free fatty acid receptor 4, found in Homo sapiens (Human).